Consider the following 133-residue polypeptide: Small ribosomal subunit protein uS11 (133 aa).

This sequence belongs to the universal ribosomal protein uS11 family. Part of the 30S ribosomal subunit. Interacts with proteins S7 and S18. Binds to IF-3.

Located on the platform of the 30S subunit, it bridges several disparate RNA helices of the 16S rRNA. Forms part of the Shine-Dalgarno cleft in the 70S ribosome. This chain is Small ribosomal subunit protein uS11, found in Christiangramia forsetii (strain DSM 17595 / CGMCC 1.15422 / KT0803) (Gramella forsetii).